A 1379-amino-acid chain; its full sequence is DNA-directed RNA polymerase subunit beta (1379 aa).

The protein belongs to the RNA polymerase beta chain family. The RNAP catalytic core consists of 2 alpha, 1 beta, 1 beta' and 1 omega subunit. When a sigma factor is associated with the core the holoenzyme is formed, which can initiate transcription.

It catalyses the reaction RNA(n) + a ribonucleoside 5'-triphosphate = RNA(n+1) + diphosphate. In terms of biological role, DNA-dependent RNA polymerase catalyzes the transcription of DNA into RNA using the four ribonucleoside triphosphates as substrates. The sequence is that of DNA-directed RNA polymerase subunit beta from Ruegeria sp. (strain TM1040) (Silicibacter sp.).